A 432-amino-acid chain; its full sequence is Tryptophan--tRNA ligase, cytoplasmic (432 aa).

Residues 111 to 120 (PSSDSMHLGH) carry the 'HIGH' region motif. Residues 295 to 299 (KMSAS) carry the 'KMSKS' region motif.

This sequence belongs to the class-I aminoacyl-tRNA synthetase family. As to quaternary structure, homodimer.

The protein resides in the cytoplasm. It catalyses the reaction tRNA(Trp) + L-tryptophan + ATP = L-tryptophyl-tRNA(Trp) + AMP + diphosphate + H(+). The protein is Tryptophan--tRNA ligase, cytoplasmic (WRS1) of Saccharomyces cerevisiae (strain ATCC 204508 / S288c) (Baker's yeast).